Consider the following 635-residue polypeptide: DNA-directed RNA polymerase III subunit rpc3 (635 aa).

Disordered stretches follow at residues 131–164 (PEQS…SDQQ), 246–295 (VPRG…GYDT), and 386–424 (SGSI…LSSG). The span at 272–292 (SVDEDDEQDEEENEWSDDEMG) shows a compositional bias: acidic residues. Over residues 398-407 (DNRRGKRPLE) the composition is skewed to basic and acidic residues. Residues 411–424 (NGTNHEGANGLSSG) are compositionally biased toward polar residues. The segment at 562-583 (TYKAMSRCFQRLRFERNRLKEF) is leucine-zipper.

It belongs to the RNA polymerase beta chain family. Component of the RNA polymerase III (Pol III) complex consisting of 17 subunits.

It is found in the nucleus. Its function is as follows. DNA-dependent RNA polymerase catalyzes the transcription of DNA into RNA using the four ribonucleoside triphosphates as substrates. Specific core component of RNA polymerase III which synthesizes small RNAs, such as 5S rRNA and tRNAs. The protein is DNA-directed RNA polymerase III subunit rpc3 (rpc82) of Aspergillus clavatus (strain ATCC 1007 / CBS 513.65 / DSM 816 / NCTC 3887 / NRRL 1 / QM 1276 / 107).